We begin with the raw amino-acid sequence, 117 residues long: Large ribosomal subunit protein bL19 (117 aa).

Belongs to the bacterial ribosomal protein bL19 family.

Functionally, this protein is located at the 30S-50S ribosomal subunit interface and may play a role in the structure and function of the aminoacyl-tRNA binding site. In Rhodopirellula baltica (strain DSM 10527 / NCIMB 13988 / SH1), this protein is Large ribosomal subunit protein bL19.